A 317-amino-acid polypeptide reads, in one-letter code: Bile salt hydrolase/transferase (317 aa).

The Nucleophile; acyl-thioester intermediate role is filled by Cys2. Positions 2 and 18 each coordinate deoxycholate. Position 82 (Asn82) interacts with taurine.

The protein belongs to the peptidase C59 family. As to quaternary structure, homotetramer. The tetramer consists of a dimer of dimers.

It carries out the reaction glycocholate + H2O = cholate + glycine. The catalysed reaction is glycodeoxycholate + H2O = deoxycholate + glycine. The enzyme catalyses chenodeoxycholate + glycine = glycochenodeoxycholate + H2O. It catalyses the reaction cholate + taurine = taurocholate + H2O. It carries out the reaction taurodeoxycholate + H2O = deoxycholate + taurine. The catalysed reaction is taurochenodeoxycholate + H2O = chenodeoxycholate + taurine. The enzyme catalyses an L-alpha-amino acid + cholate = an N-choloyl-L-alpha-amino acid + H2O. It catalyses the reaction an L-alpha-amino acid + taurocholate = an N-choloyl-L-alpha-amino acid + taurine. It carries out the reaction cholate + L-alanine = L-alanocholate + H2O. The catalysed reaction is taurocholate + L-alanine = L-alanocholate + taurine. The enzyme catalyses cholate + L-serine = L-serocholate + H2O. It catalyses the reaction taurocholate + L-serine = L-serocholate + taurine. It carries out the reaction cholate + L-histidine = L-histidocholate + H2O. The catalysed reaction is taurocholate + L-histidine = L-histidocholate + taurine. It functions in the pathway lipid metabolism; bile acid biosynthesis. Its activity is regulated as follows. Hydrolase activity is competitively inhibited by the products cholate (CA) and deoxycholate (DCA), and by phenylacetate and 4-aminophenylacetate. Penicillin V and penicillin G show mixed inhibition. Strongly inhibited by thiol enzyme inhibitors in vitro. Possesses dual functions in bile acid metabolism. Acts as a bile salt hydrolase that catalyzes the deconjugation of glycine- and taurine-linked bile salts, which occurs naturally in the intestines of humans, releasing amino acid residues and deconjugated bile salts (bile acids). Can hydrolyze the amide bond in all six major human conjugated bile salts, namely glycocholate (GCA), glycodeoxycholate (GDCA), glycochenodeoxycholate (GCDCA), taurocholate (TCA), taurodeoxycholate (TDCA) and taurochenodeoxycholate (TCDCA). Shows a slight preference for glycine-conjugated bile acids as substrates. Also acts as an amine N-acyltransferase that conjugates a wide variety of amino acids to conjugated and non-conjugated bile acids, thus producing bacterial bile acid amidates (BBAAs) - also named microbially conjugated bile acids (MCBAs) - in the gastrointestinal tract. These BBAAs may facilitate communication between the microbiota and host through the activation of human ligand-activated transcription factors. Is totally inactive toward penicillin V. In Bifidobacterium longum, this protein is Bile salt hydrolase/transferase.